Reading from the N-terminus, the 482-residue chain is Complement C1r subcomponent-like protein (482 aa).

Residues 1 to 43 (MSGFRGLVPELENSLWSSPTTSCMSKMCWWLLWGILHTCPTQA) form the signal peptide. A CUB domain is found at 44-166 (SVLLAQQSPQ…KGFLALYQAV (123 aa)). Disulfide bonds link cysteine 97–cysteine 115 and cysteine 190–cysteine 223. One can recognise a Sushi domain in the interval 166 to 225 (VAVNQPNGDTEAVTTPGAPKIQNHCQDPYYKADQTGTLSCPSSWKWKDRQDGGEVPECVP). Positions 240-479 (TFGSSRAKLG…YMDWIKRVIE (240 aa)) constitute a Peptidase S1 domain. Catalysis depends on charge relay system residues histidine 278 and aspartate 334. N-linked (GlcNAc...) asparagine glycosylation occurs at asparagine 358. Intrachain disulfides connect cysteine 397–cysteine 416 and cysteine 427–cysteine 457. Catalysis depends on serine 431, which acts as the Charge relay system.

Belongs to the peptidase S1 family. Expressed in liver (at protein level).

Its subcellular location is the secreted. Functionally, mediates the proteolytic cleavage of HP/haptoglobin in the endoplasmic reticulum. The polypeptide is Complement C1r subcomponent-like protein (C1rl) (Mus musculus (Mouse)).